A 288-amino-acid polypeptide reads, in one-letter code: DegV domain-containing protein DR_1903 (288 aa).

The 279-residue stretch at isoleucine 2–proline 280 folds into the DegV domain. The hexadecanoate site is built by threonine 59 and threonine 93.

May bind long-chain fatty acids, such as palmitate, and may play a role in lipid transport or fatty acid metabolism. The protein is DegV domain-containing protein DR_1903 of Deinococcus radiodurans (strain ATCC 13939 / DSM 20539 / JCM 16871 / CCUG 27074 / LMG 4051 / NBRC 15346 / NCIMB 9279 / VKM B-1422 / R1).